A 596-amino-acid chain; its full sequence is Protein NRT1/ PTR FAMILY 3.1 (596 aa).

The segment covering 1–16 (MEEQSKNKISEEEKQL) has biased composition (basic and acidic residues). Positions 1–23 (MEEQSKNKISEEEKQLHGRPNRP) are disordered. A run of 12 helical transmembrane segments spans residues 27 to 47 (LITM…VVGF), 73 to 93 (FAGT…SFAG), 98 to 118 (ITFA…SAII), 137 to 157 (TAQL…SGGI), 185 to 205 (NWYY…LVWI), 213 to 233 (LGLG…VGGF), 334 to 354 (MGPI…QGTF), 372 to 392 (IPAG…IIFY), 416 to 436 (MGIG…VEVK), 453 to 473 (IVPI…VAEA), 497 to 517 (ALFW…VTLV), and 542 to 562 (YFYW…LWCA).

It belongs to the major facilitator superfamily. Proton-dependent oligopeptide transporter (POT/PTR) (TC 2.A.17) family. In terms of tissue distribution, expressed in shoots, stems, leaves, flowers and siliques.

The protein resides in the membrane. In terms of biological role, may act as an efflux-type nitrite transporter. Not regulated by the PII protein involved in the regulation of nitrite uptake into higher plant chloroplasts. The chain is Protein NRT1/ PTR FAMILY 3.1 (NPF3.1) from Arabidopsis thaliana (Mouse-ear cress).